The following is a 134-amino-acid chain: Phosphoribosyl-ATP pyrophosphatase (134 aa).

Belongs to the PRA-PH family.

It is found in the cytoplasm. It carries out the reaction 1-(5-phospho-beta-D-ribosyl)-ATP + H2O = 1-(5-phospho-beta-D-ribosyl)-5'-AMP + diphosphate + H(+). It functions in the pathway amino-acid biosynthesis; L-histidine biosynthesis; L-histidine from 5-phospho-alpha-D-ribose 1-diphosphate: step 2/9. The chain is Phosphoribosyl-ATP pyrophosphatase from Verminephrobacter eiseniae (strain EF01-2).